The following is a 115-amino-acid chain: NADH-ubiquinone oxidoreductase chain 3 (115 aa).

A run of 3 helical transmembrane segments spans residues 3–23 (LMLT…IAFW), 55–75 (FFLV…LLPL), and 87–107 (VLFM…YEWI).

This sequence belongs to the complex I subunit 3 family. In terms of assembly, core subunit of respiratory chain NADH dehydrogenase (Complex I) which is composed of 45 different subunits. Interacts with TMEM186. Interacts with TMEM242.

Its subcellular location is the mitochondrion inner membrane. It catalyses the reaction a ubiquinone + NADH + 5 H(+)(in) = a ubiquinol + NAD(+) + 4 H(+)(out). Its function is as follows. Core subunit of the mitochondrial membrane respiratory chain NADH dehydrogenase (Complex I) which catalyzes electron transfer from NADH through the respiratory chain, using ubiquinone as an electron acceptor. Essential for the catalytic activity of complex I. In Dugong dugon (Dugong), this protein is NADH-ubiquinone oxidoreductase chain 3.